We begin with the raw amino-acid sequence, 310 residues long: UPF0282 protein PF0593 (310 aa).

The protein belongs to the UPF0282 family.

This Pyrococcus furiosus (strain ATCC 43587 / DSM 3638 / JCM 8422 / Vc1) protein is UPF0282 protein PF0593.